We begin with the raw amino-acid sequence, 210 residues long: Ribonuclease HII (210 aa).

One can recognise an RNase H type-2 domain in the interval 2 to 203 (SGVMGIDEAG…YKRVESEVKQ (202 aa)). Aspartate 8, glutamate 9, and aspartate 99 together coordinate a divalent metal cation.

It belongs to the RNase HII family. Requires Mn(2+) as cofactor. It depends on Mg(2+) as a cofactor.

It is found in the cytoplasm. The enzyme catalyses Endonucleolytic cleavage to 5'-phosphomonoester.. Its function is as follows. Endonuclease that specifically degrades the RNA of RNA-DNA hybrids. The polypeptide is Ribonuclease HII (Methanopyrus kandleri (strain AV19 / DSM 6324 / JCM 9639 / NBRC 100938)).